The chain runs to 353 residues: Anthranilate phosphoribosyltransferase (353 aa).

5-phospho-alpha-D-ribose 1-diphosphate is bound by residues Gly86, 89–90 (GD), 96–99 (NVST), 114–122 (KHGNRAVSG), and Ser126. Gly86 is an anthranilate binding site. Ser98 lines the Mg(2+) pocket. Asn117 contacts anthranilate. Residue Arg172 participates in anthranilate binding. Mg(2+) contacts are provided by Asp231 and Glu232.

This sequence belongs to the anthranilate phosphoribosyltransferase family. Homodimer. Requires Mg(2+) as cofactor.

The enzyme catalyses N-(5-phospho-beta-D-ribosyl)anthranilate + diphosphate = 5-phospho-alpha-D-ribose 1-diphosphate + anthranilate. The protein operates within amino-acid biosynthesis; L-tryptophan biosynthesis; L-tryptophan from chorismate: step 2/5. In terms of biological role, catalyzes the transfer of the phosphoribosyl group of 5-phosphorylribose-1-pyrophosphate (PRPP) to anthranilate to yield N-(5'-phosphoribosyl)-anthranilate (PRA). The protein is Anthranilate phosphoribosyltransferase of Pseudomonas syringae pv. syringae (strain B728a).